We begin with the raw amino-acid sequence, 737 residues long: Palmitoyltransferase akr1 (737 aa).

The interval 1 to 60 is disordered; sequence MSSGDPPSGLQASGSNSSAALGLSPPSAPSGKSAATPPKVATDDASVELSSMKSERSPAK. The Cytoplasmic segment spans residues 1 to 314; the sequence is MSSGDPPSGL…YVRDKAIMSK (314 aa). Residues 7-38 show a composition bias toward low complexity; it reads PSGLQASGSNSSAALGLSPPSAPSGKSAATPP. ANK repeat units follow at residues 97 to 126, 131 to 160, 164 to 193, 197 to 226, and 230 to 259; these read EGIT…DVNA, SVAT…DPLL, QGYN…PVDV, QGHT…NPNA, and GGLA…DRFA. 2 helical membrane-spanning segments follow: residues 315 to 335 and 336 to 356; these read FFFF…SNMV and VYFA…VAKK. Over 357–372 the chain is Cytoplasmic; that stretch reads AASQGPSEFRIIQKTP. The helical transmembrane segment at 373–393 threads the bilayer; it reads FLAGVFAGSLFWVFVRYVLYV. The Lumenal portion of the chain corresponds to 394 to 402; sequence LPATYSTNP. The helical transmembrane segment at 403–423 threads the bilayer; sequence FLNLGFVVFFSLTTYFYFYSM. At 424–500 the chain is on the cytoplasmic side; the sequence is VADPGYVPKL…NCVGVNNLRQ (77 aa). A DHHC domain is found at 456–506; that stretch reads NFCVYCMIRRPLRSKHCRRCSRCVAKHDHHCPWIDNCVGVNNLRQFVLYIL. Cys-486 functions as the S-palmitoyl cysteine intermediate in the catalytic mechanism. Residues 501 to 521 traverse the membrane as a helical segment; that stretch reads FVLYILCLEIGIILFLHLTFN. Topologically, residues 522-549 are lumenal; sequence YINGLPAPAEPICNILNDQICSFVLRDT. The chain crosses the membrane as a helical span at residues 550–570; it reads FTLLLDVWIAIQLVWVTMLGV. Topologically, residues 571–737 are cytoplasmic; the sequence is VQLVQVSRNQ…VAYDEAADIV (167 aa).

It belongs to the DHHC palmitoyltransferase family. AKR/ZDHHC17 subfamily.

The protein localises to the early endosome membrane. It is found in the golgi apparatus membrane. It carries out the reaction L-cysteinyl-[protein] + hexadecanoyl-CoA = S-hexadecanoyl-L-cysteinyl-[protein] + CoA. Its function is as follows. Palmitoyltransferase specific for casein kinase 1. The sequence is that of Palmitoyltransferase akr1 (akr1) from Emericella nidulans (strain FGSC A4 / ATCC 38163 / CBS 112.46 / NRRL 194 / M139) (Aspergillus nidulans).